The primary structure comprises 148 residues: Deoxyuridine 5'-triphosphate nucleotidohydrolase (148 aa).

Substrate is bound by residues 68–70 (RSG), Asn81, 85–87 (TID), and Lys95.

It belongs to the dUTPase family. Mg(2+) is required as a cofactor.

It catalyses the reaction dUTP + H2O = dUMP + diphosphate + H(+). The protein operates within pyrimidine metabolism; dUMP biosynthesis; dUMP from dCTP (dUTP route): step 2/2. In terms of biological role, this enzyme is involved in nucleotide metabolism: it produces dUMP, the immediate precursor of thymidine nucleotides and it decreases the intracellular concentration of dUTP so that uracil cannot be incorporated into DNA. This chain is Deoxyuridine 5'-triphosphate nucleotidohydrolase, found in Rickettsia felis (strain ATCC VR-1525 / URRWXCal2) (Rickettsia azadi).